A 411-amino-acid chain; its full sequence is Acetylornithine aminotransferase (411 aa).

Residues 107–108 and phenylalanine 141 each bind pyridoxal 5'-phosphate; that span reads GT. Arginine 144 is a binding site for N(2)-acetyl-L-ornithine. A pyridoxal 5'-phosphate-binding site is contributed by 227 to 230; that stretch reads DEIQ. Lysine 256 is subject to N6-(pyridoxal phosphate)lysine. Threonine 284 serves as a coordination point for N(2)-acetyl-L-ornithine. Threonine 285 provides a ligand contact to pyridoxal 5'-phosphate.

Belongs to the class-III pyridoxal-phosphate-dependent aminotransferase family. ArgD subfamily. In terms of assembly, homodimer. Requires pyridoxal 5'-phosphate as cofactor.

The protein resides in the cytoplasm. The enzyme catalyses N(2)-acetyl-L-ornithine + 2-oxoglutarate = N-acetyl-L-glutamate 5-semialdehyde + L-glutamate. The protein operates within amino-acid biosynthesis; L-arginine biosynthesis; N(2)-acetyl-L-ornithine from L-glutamate: step 4/4. This chain is Acetylornithine aminotransferase, found in Xylella fastidiosa (strain Temecula1 / ATCC 700964).